The chain runs to 84 residues: Large ribosomal subunit protein bL27 (84 aa).

Residues 1–22 are disordered; the sequence is MAHKKAGGSTRNGRDSESKRLG.

It belongs to the bacterial ribosomal protein bL27 family.

The sequence is that of Large ribosomal subunit protein bL27 from Shewanella baltica (strain OS223).